The chain runs to 436 residues: 3-ketoacyl-CoA thiolase (436 aa).

Cys-99 acts as the Acyl-thioester intermediate in catalysis. Catalysis depends on proton acceptor residues His-392 and Cys-422.

It belongs to the thiolase-like superfamily. Thiolase family. Heterotetramer of two alpha chains (FadJ) and two beta chains (FadI).

It localises to the cytoplasm. The catalysed reaction is an acyl-CoA + acetyl-CoA = a 3-oxoacyl-CoA + CoA. It functions in the pathway lipid metabolism; fatty acid beta-oxidation. Its function is as follows. Catalyzes the final step of fatty acid oxidation in which acetyl-CoA is released and the CoA ester of a fatty acid two carbons shorter is formed. This Photobacterium profundum (strain SS9) protein is 3-ketoacyl-CoA thiolase.